The primary structure comprises 223 residues: MSHFFITASGTEIGKTHVAAGMIRHWRAGDVPARALKPVASGYQPALSASSDAGILLRAMGSSMVNDEAVATICPWRFPDPISPDMAAARSGRRIPFDDLVAFCQAEIVGAAGPMLVEGVGGAMVPLDETHTVRDWIAALGIEVVLVAGGYLGTISHTLCAVEALRARGIAIAAVVINPMEPLPVPVERTRESLLRHLGATPPPVFIDDTPDWHAWLDEAARR.

Position 12–17 (12–17 (EIGKTH)) interacts with ATP. Mg(2+) is bound at residue T16. The active site involves K37. Position 41 (S41) interacts with substrate. Residues D52 and 118 to 121 (EGVG) each bind ATP. Mg(2+) is bound by residues D52 and E118.

Belongs to the dethiobiotin synthetase family. Homodimer. Mg(2+) serves as cofactor.

The protein localises to the cytoplasm. It carries out the reaction (7R,8S)-7,8-diammoniononanoate + CO2 + ATP = (4R,5S)-dethiobiotin + ADP + phosphate + 3 H(+). Its pathway is cofactor biosynthesis; biotin biosynthesis; biotin from 7,8-diaminononanoate: step 1/2. Catalyzes a mechanistically unusual reaction, the ATP-dependent insertion of CO2 between the N7 and N8 nitrogen atoms of 7,8-diaminopelargonic acid (DAPA, also called 7,8-diammoniononanoate) to form a ureido ring. The chain is ATP-dependent dethiobiotin synthetase BioD from Acidiphilium cryptum (strain JF-5).